The primary structure comprises 247 residues: Ribonuclease 3 (247 aa).

Positions 23–149 (HADLLERLGV…LLGAIFRQHG (127 aa)) constitute an RNase III domain. Mg(2+) is bound at residue E62. The active site involves D66. Mg(2+) is bound by residues D135 and E138. The active site involves E138. Residues 176–244 (DWKTTLQEEL…ARQAFLKLRE (69 aa)) form the DRBM domain.

The protein belongs to the ribonuclease III family. Homodimer. Mg(2+) serves as cofactor.

It localises to the cytoplasm. It catalyses the reaction Endonucleolytic cleavage to 5'-phosphomonoester.. Digests double-stranded RNA. Involved in the processing of primary rRNA transcript to yield the immediate precursors to the large and small rRNAs (23S and 16S). Processes some mRNAs, and tRNAs when they are encoded in the rRNA operon. Processes pre-crRNA and tracrRNA of type II CRISPR loci if present in the organism. This Corynebacterium efficiens (strain DSM 44549 / YS-314 / AJ 12310 / JCM 11189 / NBRC 100395) protein is Ribonuclease 3.